Here is a 151-residue protein sequence, read N- to C-terminus: Small ribosomal subunit protein uS13 (151 aa).

Positions 131–151 are disordered; the sequence is RGQRTKSSFRRGRTVGVKKKQ. Positions 133 to 151 are enriched in basic residues; the sequence is QRTKSSFRRGRTVGVKKKQ.

This sequence belongs to the universal ribosomal protein uS13 family. Part of the 30S ribosomal subunit. Forms a loose heterodimer with protein S19. Forms two bridges to the 50S subunit in the 70S ribosome.

In terms of biological role, located at the top of the head of the 30S subunit, it contacts several helices of the 16S rRNA. In the 70S ribosome it contacts the 23S rRNA (bridge B1a) and protein L5 of the 50S subunit (bridge B1b), connecting the 2 subunits; these bridges are implicated in subunit movement. In Methanopyrus kandleri (strain AV19 / DSM 6324 / JCM 9639 / NBRC 100938), this protein is Small ribosomal subunit protein uS13.